The sequence spans 201 residues: MARYTGPLTKKSRRLGTDLVGNDKSFERRPYPPGVHGRGRTKDSEYSLQLREKQKARYAYGVLEKQFRRYYEEADRAQGKTGDVLLQILESRLDNVVYRAGLAATRRQARQMVSHGHFLVNGKKVNIPSYRVSTHDIIDVREKSKDLPPIVIARETFETRDVPAWLEVRPNKGRILVHQLPTRDQIVIDVNEQAIVELYSK.

The tract at residues 1-45 (MARYTGPLTKKSRRLGTDLVGNDKSFERRPYPPGVHGRGRTKDSE) is disordered. In terms of domain architecture, S4 RNA-binding spans 91–157 (SRLDNVVYRA…PPIVIARETF (67 aa)).

It belongs to the universal ribosomal protein uS4 family. In terms of assembly, part of the 30S ribosomal subunit. Contacts protein S5. The interaction surface between S4 and S5 is involved in control of translational fidelity.

One of the primary rRNA binding proteins, it binds directly to 16S rRNA where it nucleates assembly of the body of the 30S subunit. In terms of biological role, with S5 and S12 plays an important role in translational accuracy. The protein is Small ribosomal subunit protein uS4 of Cutibacterium acnes (strain DSM 16379 / KPA171202) (Propionibacterium acnes).